The sequence spans 274 residues: Penicillin-insensitive murein endopeptidase (274 aa).

The first 19 residues, 1-19, serve as a signal peptide directing secretion; sequence MNKTAIALLALLASSVSLA. Intrachain disulfides connect Cys-44-Cys-265, Cys-187-Cys-235, and Cys-216-Cys-223. Zn(2+)-binding residues include His-110, His-113, Asp-120, Asp-147, His-150, and His-211. Residues 227–274 form a disordered region; sequence PLPPPGDGCGAELQSWFEPPKPGTTKPEKKTPPPLPPSCQALLDEHVI.

This sequence belongs to the peptidase M74 family. In terms of assembly, dimer. Requires Zn(2+) as cofactor.

The protein localises to the periplasm. Functionally, murein endopeptidase that cleaves the D-alanyl-meso-2,6-diamino-pimelyl amide bond that connects peptidoglycan strands. Likely plays a role in the removal of murein from the sacculus. The protein is Penicillin-insensitive murein endopeptidase of Escherichia coli O157:H7.